The sequence spans 181 residues: Inner membrane-spanning protein YciB (181 aa).

The next 5 helical transmembrane spans lie at 8-28 (FPII…ATAA), 53-73 (ITLI…NAIF), 76-96 (WKPT…HFFG), 121-141 (LSWA…VYNF), and 149-169 (FKLF…AFYI).

Belongs to the YciB family.

Its subcellular location is the cell inner membrane. Its function is as follows. Plays a role in cell envelope biogenesis, maintenance of cell envelope integrity and membrane homeostasis. This chain is Inner membrane-spanning protein YciB, found in Coxiella burnetii (strain CbuG_Q212) (Coxiella burnetii (strain Q212)).